A 1014-amino-acid polypeptide reads, in one-letter code: Klotho (1014 aa).

A signal peptide spans 1–35 (MPASAPPRRPRPPPPSLSLSLLLVLLGLAGRRLRA). Residues 36–983 (EPGDGAQTWA…ECSFFHTRKP (948 aa)) lie on the Extracellular side of the membrane. Glycosyl hydrolase-1 regions lie at residues 59–508 (FQGT…KNGF) and 517–955 (LEGT…SNGF). 6 N-linked (GlcNAc...) asparagine glycosylation sites follow: asparagine 161, asparagine 285, asparagine 346, asparagine 609, asparagine 614, and asparagine 696. The helical transmembrane segment at 984-1004 (LVAFIAFLFFAFIVSLSLIFY) threads the bilayer. Residues 1005–1014 (YSKKGRRRYQ) lie on the Cytoplasmic side of the membrane.

The protein belongs to the glycosyl hydrolase 1 family. Klotho subfamily. As to quaternary structure, homodimer. Interacts with FGF23 and FGFR1.

It is found in the cell membrane. The protein resides in the apical cell membrane. Its subcellular location is the secreted. It carries out the reaction a beta-D-glucuronoside + H2O = D-glucuronate + an alcohol. May have weak glycosidase activity towards glucuronylated steroids. However, it lacks essential active site Glu residues at positions 241 and 874, suggesting it may be inactive as a glycosidase in vivo. May be involved in the regulation of calcium and phosphorus homeostasis by inhibiting the synthesis of active vitamin D. Essential factor for the specific interaction between FGF23 and FGFR1. In terms of biological role, the Klotho peptide generated by cleavage of the membrane-bound isoform may be an anti-aging circulating hormone which would extend life span by inhibiting insulin/IGF1 signaling. The chain is Klotho (KL) from Macaca fascicularis (Crab-eating macaque).